An 89-amino-acid polypeptide reads, in one-letter code: Acylphosphatase (89 aa).

One can recognise an Acylphosphatase-like domain in the interval 3–89 (RKEFLVSGRV…DTREKRFSTY (87 aa)). Residues R18 and N36 contribute to the active site.

This sequence belongs to the acylphosphatase family.

The enzyme catalyses an acyl phosphate + H2O = a carboxylate + phosphate + H(+). This chain is Acylphosphatase (acyP), found in Clostridium perfringens (strain ATCC 13124 / DSM 756 / JCM 1290 / NCIMB 6125 / NCTC 8237 / Type A).